Reading from the N-terminus, the 304-residue chain is L-xylo-3-hexulose reductase (304 aa).

NADP(+)-binding residues include Ile-19, Asp-68, and Asn-107. Catalysis depends on proton donor residues Ser-163 and Ser-164. 3 residues coordinate NADP(+): Tyr-177, Lys-181, and Ala-209. The active-site Proton acceptor is Tyr-177. Lys-181 acts as the Lowers pKa of active site Tyr in catalysis.

Belongs to the short-chain dehydrogenases/reductases (SDR) family.

The enzyme catalyses D-sorbitol + NADP(+) = L-xylo-3-hexulose + NADPH + H(+). The protein operates within carbohydrate degradation. In terms of biological role, L-xylulose reductase involved in the catabolism of D-galactose through an oxidoreductive pathway. Catalyzes the NADPH-dependent reduction of L-xylo-3-hexulose. Is also active with D-ribulose and L-xylulose, and to a lesser extent with D-xylulose, D-fructose and L- and D-sorbose. In the reverse reaction, shows activity with D-sorbitol and D-mannitol, low activity with xylitol, but no activity with galactitol, ribitol, and L- and D-arabitol. The chain is L-xylo-3-hexulose reductase from Hypocrea jecorina (strain QM6a) (Trichoderma reesei).